The following is a 401-amino-acid chain: Keratin-associated protein 10-4 (401 aa).

35 consecutive repeat copies span residues 36 to 40 (CCEPP), 41 to 45 (CCAPS), 46 to 50 (CCAPA), 67 to 71 (CCPVT), 89 to 93 (CCQQS), 99 to 103 (CCASS), 109 to 113 (CCVPV), 114 to 118 (CCKTV), 119 to 123 (CCKPV), 124 to 128 (CCVPV), 129 to 133 (CCGDS), 135 to 139 (CCQQS), 145 to 149 (CCTSS), 155 to 159 (CCVPI), 160 to 164 (CCKPV), 172 to 176 (CCQQS), 186 to 190 (CCQAV), 208 to 212 (CCQQS), 218 to 222 (CCTSS), 228 to 232 (CCVPV), 233 to 237 (CCKTV), 238 to 242 (CCKPV), 250 to 254 (CCQQS), 270 to 274 (CCVPV), 275 to 279 (CCKPV), 280 to 284 (CCKPV), 297 to 301 (CCQQS), 307 to 311 (CCTSS), 317 to 321 (CCVPV), 322 to 326 (CCKPV), 339 to 343 (CCQQS), 349 to 353 (CCTTS), 354 to 358 (CCRPS), 373 to 377 (CCVPV), and 391 to 395 (CCRPA). Positions 36–395 (CCEPPCCAPS…SCQPSCCRPA (360 aa)) are 36 X 5 AA repeats of C-C-X(3).

It belongs to the KRTAP type 10 family. In terms of assembly, interacts with hair keratins. As to expression, restricted to hair root, not detected in any other tissues.

In the hair cortex, hair keratin intermediate filaments are embedded in an interfilamentous matrix, consisting of hair keratin-associated proteins (KRTAP), which are essential for the formation of a rigid and resistant hair shaft through their extensive disulfide bond cross-linking with abundant cysteine residues of hair keratins. The matrix proteins include the high-sulfur and high-glycine-tyrosine keratins. The protein is Keratin-associated protein 10-4 (KRTAP10-4) of Homo sapiens (Human).